We begin with the raw amino-acid sequence, 337 residues long: Ketol-acid reductoisomerase (NADP(+)) (337 aa).

Residues 1–180 enclose the KARI N-terminal Rossmann domain; that stretch reads MKIYYDTDVN…GGGRAGIIET (180 aa). NADP(+) contacts are provided by residues 24-27, R47, S51, and 81-84; these read YGSQ and DELQ. H106 is an active-site residue. An NADP(+)-binding site is contributed by G132. The KARI C-terminal knotted domain occupies 181-326; it reads TFKDETETDL…EKLRAMMPWL (146 aa). Positions 189, 193, 225, and 229 each coordinate Mg(2+). S250 is a binding site for substrate.

This sequence belongs to the ketol-acid reductoisomerase family. It depends on Mg(2+) as a cofactor.

It carries out the reaction (2R)-2,3-dihydroxy-3-methylbutanoate + NADP(+) = (2S)-2-acetolactate + NADPH + H(+). It catalyses the reaction (2R,3R)-2,3-dihydroxy-3-methylpentanoate + NADP(+) = (S)-2-ethyl-2-hydroxy-3-oxobutanoate + NADPH + H(+). The protein operates within amino-acid biosynthesis; L-isoleucine biosynthesis; L-isoleucine from 2-oxobutanoate: step 2/4. Its pathway is amino-acid biosynthesis; L-valine biosynthesis; L-valine from pyruvate: step 2/4. In terms of biological role, involved in the biosynthesis of branched-chain amino acids (BCAA). Catalyzes an alkyl-migration followed by a ketol-acid reduction of (S)-2-acetolactate (S2AL) to yield (R)-2,3-dihydroxy-isovalerate. In the isomerase reaction, S2AL is rearranged via a Mg-dependent methyl migration to produce 3-hydroxy-3-methyl-2-ketobutyrate (HMKB). In the reductase reaction, this 2-ketoacid undergoes a metal-dependent reduction by NADPH to yield (R)-2,3-dihydroxy-isovalerate. This Thermodesulfovibrio yellowstonii (strain ATCC 51303 / DSM 11347 / YP87) protein is Ketol-acid reductoisomerase (NADP(+)).